A 127-amino-acid chain; its full sequence is Small ribosomal subunit protein uS11 (127 aa).

It belongs to the universal ribosomal protein uS11 family. In terms of assembly, part of the 30S ribosomal subunit. Interacts with proteins S7 and S18. Binds to IF-3.

Functionally, located on the platform of the 30S subunit, it bridges several disparate RNA helices of the 16S rRNA. Forms part of the Shine-Dalgarno cleft in the 70S ribosome. This is Small ribosomal subunit protein uS11 from Flavobacterium psychrophilum (strain ATCC 49511 / DSM 21280 / CIP 103535 / JIP02/86).